The following is a 248-amino-acid chain: Aspartate/glutamate leucyltransferase (248 aa).

The protein belongs to the R-transferase family. Bpt subfamily.

Its subcellular location is the cytoplasm. The catalysed reaction is N-terminal L-glutamyl-[protein] + L-leucyl-tRNA(Leu) = N-terminal L-leucyl-L-glutamyl-[protein] + tRNA(Leu) + H(+). It carries out the reaction N-terminal L-aspartyl-[protein] + L-leucyl-tRNA(Leu) = N-terminal L-leucyl-L-aspartyl-[protein] + tRNA(Leu) + H(+). In terms of biological role, functions in the N-end rule pathway of protein degradation where it conjugates Leu from its aminoacyl-tRNA to the N-termini of proteins containing an N-terminal aspartate or glutamate. The polypeptide is Aspartate/glutamate leucyltransferase (Methylobacterium sp. (strain 4-46)).